An 86-amino-acid polypeptide reads, in one-letter code: Small ribosomal subunit protein bS20 (86 aa).

Positions 1–25 (MANIKSQQKRNKTNERARLRNKSVK) are disordered.

This sequence belongs to the bacterial ribosomal protein bS20 family.

Its function is as follows. Binds directly to 16S ribosomal RNA. The protein is Small ribosomal subunit protein bS20 of Mycobacterium avium (strain 104).